A 163-amino-acid chain; its full sequence is Large ribosomal subunit protein uL10 (163 aa).

This sequence belongs to the universal ribosomal protein uL10 family. In terms of assembly, part of the ribosomal stalk of the 50S ribosomal subunit. The N-terminus interacts with L11 and the large rRNA to form the base of the stalk. The C-terminus forms an elongated spine to which L12 dimers bind in a sequential fashion forming a multimeric L10(L12)X complex.

Functionally, forms part of the ribosomal stalk, playing a central role in the interaction of the ribosome with GTP-bound translation factors. This chain is Large ribosomal subunit protein uL10, found in Glaesserella parasuis serovar 5 (strain SH0165) (Haemophilus parasuis).